The sequence spans 230 residues: U2 small nuclear ribonucleoprotein A' (230 aa).

LRR repeat units lie at residues 19–40, 41–62, and 65–86; these read KDRE…PFFP, RLRM…LANS, and GLTT…DPLR. Positions 99–137 constitute an LRRCT domain; it reads NPVTRKEYYRLWIIWRIPSVRFLDYQKVKDAERAKAAEL. Residues 211–230 form a disordered region; it reads GRIPGGALDGAGNDGDQMQL. The span at 213 to 223 shows a compositional bias: gly residues; sequence IPGGALDGAGN.

Belongs to the U2 small nuclear ribonucleoprotein A family. Associated with the spliceosome.

It is found in the nucleus. In terms of biological role, involved in pre-mRNA splicing. The chain is U2 small nuclear ribonucleoprotein A' (lea1) from Emericella nidulans (strain FGSC A4 / ATCC 38163 / CBS 112.46 / NRRL 194 / M139) (Aspergillus nidulans).